Consider the following 804-residue polypeptide: Phenylalanine--tRNA ligase beta subunit (804 aa).

One can recognise a tRNA-binding domain in the interval 39 to 155 (EEGLKKLVVG…ADVKPGQDVY (117 aa)). The B5 domain occupies 408 to 483 (REPVVVKTTV…RIYGYDNLKS (76 aa)). Mg(2+) is bound by residues Asp-461, Asp-467, Glu-470, and Glu-471. An FDX-ACB domain is found at 711 to 804 (PKFPAIERDL…LENDLDIKVR (94 aa)).

Belongs to the phenylalanyl-tRNA synthetase beta subunit family. Type 1 subfamily. As to quaternary structure, tetramer of two alpha and two beta subunits. Mg(2+) serves as cofactor.

The protein resides in the cytoplasm. The enzyme catalyses tRNA(Phe) + L-phenylalanine + ATP = L-phenylalanyl-tRNA(Phe) + AMP + diphosphate + H(+). The chain is Phenylalanine--tRNA ligase beta subunit from Lactobacillus acidophilus (strain ATCC 700396 / NCK56 / N2 / NCFM).